A 240-amino-acid polypeptide reads, in one-letter code: Uridylate kinase (240 aa).

13–16 (KASG) is an ATP binding site. The segment at 21 to 26 (GSQGFG) is involved in allosteric activation by GTP. Residue G55 coordinates UMP. 2 residues coordinate ATP: G56 and R60. UMP is bound by residues D75 and 136-143 (TGNPFFTT). Residues T163, Q164, Y169, and D172 each coordinate ATP.

This sequence belongs to the UMP kinase family. In terms of assembly, homohexamer.

The protein resides in the cytoplasm. The catalysed reaction is UMP + ATP = UDP + ADP. It participates in pyrimidine metabolism; CTP biosynthesis via de novo pathway; UDP from UMP (UMPK route): step 1/1. With respect to regulation, allosterically activated by GTP. Inhibited by UTP. Functionally, catalyzes the reversible phosphorylation of UMP to UDP. This is Uridylate kinase from Brucella abortus biovar 1 (strain 9-941).